Here is a 207-residue protein sequence, read N- to C-terminus: ATP-dependent Clp protease proteolytic subunit 1 (207 aa).

Ser-103 functions as the Nucleophile in the catalytic mechanism. His-128 is a catalytic residue.

Belongs to the peptidase S14 family. Fourteen ClpP subunits assemble into 2 heptameric rings which stack back to back to give a disk-like structure with a central cavity, resembling the structure of eukaryotic proteasomes.

The protein resides in the cytoplasm. It catalyses the reaction Hydrolysis of proteins to small peptides in the presence of ATP and magnesium. alpha-casein is the usual test substrate. In the absence of ATP, only oligopeptides shorter than five residues are hydrolyzed (such as succinyl-Leu-Tyr-|-NHMec, and Leu-Tyr-Leu-|-Tyr-Trp, in which cleavage of the -Tyr-|-Leu- and -Tyr-|-Trp bonds also occurs).. Functionally, cleaves peptides in various proteins in a process that requires ATP hydrolysis. Has a chymotrypsin-like activity. Plays a major role in the degradation of misfolded proteins. The polypeptide is ATP-dependent Clp protease proteolytic subunit 1 (Tropheryma whipplei (strain Twist) (Whipple's bacillus)).